The following is a 251-amino-acid chain: Hydroxyacylglutathione hydrolase (251 aa).

7 residues coordinate Zn(2+): His-53, His-55, Asp-57, His-58, His-110, Asp-127, and His-165.

This sequence belongs to the metallo-beta-lactamase superfamily. Glyoxalase II family. Monomer. Zn(2+) is required as a cofactor.

It catalyses the reaction an S-(2-hydroxyacyl)glutathione + H2O = a 2-hydroxy carboxylate + glutathione + H(+). It functions in the pathway secondary metabolite metabolism; methylglyoxal degradation; (R)-lactate from methylglyoxal: step 2/2. Functionally, thiolesterase that catalyzes the hydrolysis of S-D-lactoyl-glutathione to form glutathione and D-lactic acid. This Shigella boydii serotype 4 (strain Sb227) protein is Hydroxyacylglutathione hydrolase.